The sequence spans 310 residues: MARTDNDTWDLASSVGATATMVAAARAVATRAPRPVIDDPFAAPLVQAVGVDFFTRLATGELTTEELDTNDAESPVGMSRFADAMAARTRFFDDFFAEAMRAGPPPIRQGVILASGLDARAYRLSWPQDMVLFEIDQPEVLTFKAATLADLGVRPSTKLATVAVDLRNDWPAALAEAGFDASAPTAWIAEGLLGYLPPDAQDRLLDTIGELSAPGSRLAVESVPTHHEADQEELREKMKESSDRWRSHGFDVDFSELVFLGERADVTDYLRDRGWTVDATPTNQLLTRYGLAPLDSDEGFAEVVYVSATR.

Residues D136 and 165 to 166 (DL) contribute to the S-adenosyl-L-methionine site.

It belongs to the UPF0677 family.

Its function is as follows. Exhibits S-adenosyl-L-methionine-dependent methyltransferase activity. The protein is Putative S-adenosyl-L-methionine-dependent methyltransferase Mvan_1346 of Mycolicibacterium vanbaalenii (strain DSM 7251 / JCM 13017 / BCRC 16820 / KCTC 9966 / NRRL B-24157 / PYR-1) (Mycobacterium vanbaalenii).